Consider the following 208-residue polypeptide: Small ribosomal subunit protein eS8 (208 aa).

The interval 1 to 27 (MGISRDNWHKRRKTGGKRKPYHKKRKY) is disordered. Gly2 carries N-myristoyl glycine lipidation. Basic residues predominate over residues 8-26 (WHKRRKTGGKRKPYHKKRK). N6-acetyllysine is present on residues Lys37 and Lys128. Thr130 is modified (phosphothreonine). Ser160 is subject to Phosphoserine. Glycyl lysine isopeptide (Lys-Gly) (interchain with G-Cter in SUMO2) cross-links involve residues Lys170 and Lys193.

This sequence belongs to the eukaryotic ribosomal protein eS8 family. As to quaternary structure, component of the small ribosomal subunit. Identified in a IGF2BP1-dependent mRNP granule complex containing untranslated mRNAs. Part of the small subunit (SSU) processome, composed of more than 70 proteins and the RNA chaperone small nucleolar RNA (snoRNA) U3.

The protein resides in the cytoplasm. It is found in the membrane. The protein localises to the nucleus. Its subcellular location is the nucleolus. Its function is as follows. Component of the small ribosomal subunit. The ribosome is a large ribonucleoprotein complex responsible for the synthesis of proteins in the cell. Part of the small subunit (SSU) processome, first precursor of the small eukaryotic ribosomal subunit. During the assembly of the SSU processome in the nucleolus, many ribosome biogenesis factors, an RNA chaperone and ribosomal proteins associate with the nascent pre-rRNA and work in concert to generate RNA folding, modifications, rearrangements and cleavage as well as targeted degradation of pre-ribosomal RNA by the RNA exosome. The polypeptide is Small ribosomal subunit protein eS8 (RPS8) (Oryctolagus cuniculus (Rabbit)).